Consider the following 283-residue polypeptide: 4-diphosphocytidyl-2-C-methyl-D-erythritol kinase (283 aa).

Residue K10 is part of the active site. 99-109 (PMGGGLGGGSS) lines the ATP pocket. D141 is a catalytic residue.

The protein belongs to the GHMP kinase family. IspE subfamily. Homodimer.

It catalyses the reaction 4-CDP-2-C-methyl-D-erythritol + ATP = 4-CDP-2-C-methyl-D-erythritol 2-phosphate + ADP + H(+). It functions in the pathway isoprenoid biosynthesis; isopentenyl diphosphate biosynthesis via DXP pathway; isopentenyl diphosphate from 1-deoxy-D-xylulose 5-phosphate: step 3/6. Its function is as follows. Catalyzes the phosphorylation of the position 2 hydroxy group of 4-diphosphocytidyl-2C-methyl-D-erythritol. The chain is 4-diphosphocytidyl-2-C-methyl-D-erythritol kinase from Escherichia coli O157:H7 (strain EC4115 / EHEC).